The chain runs to 98 residues: Small ribosomal subunit protein bS20 (98 aa).

Belongs to the bacterial ribosomal protein bS20 family.

Its function is as follows. Binds directly to 16S ribosomal RNA. This Prochlorococcus marinus (strain NATL1A) protein is Small ribosomal subunit protein bS20.